Reading from the N-terminus, the 679-residue chain is NADPH--cytochrome P450 reductase (679 aa).

The Lumenal portion of the chain corresponds to 1–21 (MASEQTIDGAAAIPSGGGDEP). Residues 22–42 (FLGLLDVALLAVLIGGAAFYF) form a helical membrane-spanning segment. Topologically, residues 43 to 679 (LRSRKKEEEP…QKRYSADVWS (637 aa)) are cytoplasmic. A Flavodoxin-like domain is found at 84–228 (LVVFYGSQTG…DFITWKDRFW (145 aa)). Residues 90–95 (SQTGTG), 142–145 (ATYG), 177–186 (LGNKTYEHYN), and Asp212 each bind FMN. Positions 283 to 523 (KNPFLAPIKV…FIRKSQFRLP (241 aa)) constitute an FAD-binding FR-type domain. Position 302 (Arg302) interacts with NADP(+). FAD-binding positions include 458 to 461 (RYYS), 476 to 478 (TAV), Tyr482, and 492 to 495 (GVAT). Residues Thr537, 597-598 (SR), 603-607 (KVYVQ), and Asp640 each bind NADP(+). Residue Trp678 participates in FAD binding.

Belongs to the NADPH--cytochrome P450 reductase family. This sequence in the N-terminal section; belongs to the flavodoxin family. It in the C-terminal section; belongs to the flavoprotein pyridine nucleotide cytochrome reductase family. As to quaternary structure, interacts with sturkopf. Requires FAD as cofactor. FMN serves as cofactor. In terms of tissue distribution, high in antennae.

The protein localises to the endoplasmic reticulum membrane. It catalyses the reaction 2 oxidized [cytochrome P450] + NADPH = 2 reduced [cytochrome P450] + NADP(+) + H(+). Its function is as follows. This enzyme is required for electron transfer from NADP to cytochrome p450 in microsomes. It can also provide electron transfer to heme oxygenase and cytochrome b5. May function to clear the olfactory organ (antennae) from accumulating chemicals. The sequence is that of NADPH--cytochrome P450 reductase (Cpr) from Drosophila melanogaster (Fruit fly).